The sequence spans 358 residues: MIDALFPLARPLLHGLDAETAHDLTIRGLSLLPPRRPPADDASLAVEMFGQSFPNPVGLAAGFDKGARVADALLGLGFGFVEVGGVVPQPQPGNPRPRVFRLPRDRAVINRFGLNSEGLDAVADRLKARAGREGIVGVNIGANKESADRLADYVACTARLAPHVAFITVNVSSPNTPGLRDLQGEAFLDDLLARVVAARDASGSSAAVLLKIAPDIALEGLDAMTATALRRGIQGLVVSNTTIARPSSLVESSVAKETGGLSGRPLFGLSTRLLAETYLRVGDRIPLIGVGGIDSAEAAWAKIRAGARLVQLYSALVYEGPGLVGTIKRGLSQRLRAEGLTSLAPVVGRDAAALARDA.

FMN-binding positions include 61–65 (AGFDK) and Gly85. Lys65 contacts substrate. Substrate is bound at residue 110–114 (NRFGL). The FMN site is built by Asn139 and Asn170. Asn170 contacts substrate. Residue Ser173 is the Nucleophile of the active site. Position 175 (Asn175) interacts with substrate. Residues Lys211 and Ser239 each coordinate FMN. 240–241 (NT) provides a ligand contact to substrate. FMN is bound by residues Gly263, Gly292, and 313 to 314 (YS).

Belongs to the dihydroorotate dehydrogenase family. Type 2 subfamily. As to quaternary structure, monomer. FMN serves as cofactor.

The protein localises to the cell membrane. The enzyme catalyses (S)-dihydroorotate + a quinone = orotate + a quinol. It participates in pyrimidine metabolism; UMP biosynthesis via de novo pathway; orotate from (S)-dihydroorotate (quinone route): step 1/1. In terms of biological role, catalyzes the conversion of dihydroorotate to orotate with quinone as electron acceptor. The sequence is that of Dihydroorotate dehydrogenase (quinone) from Methylorubrum extorquens (strain CM4 / NCIMB 13688) (Methylobacterium extorquens).